We begin with the raw amino-acid sequence, 554 residues long: Formate--tetrahydrofolate ligase (554 aa).

Residue 64–71 (TPYGEGKT) coordinates ATP.

The protein belongs to the formate--tetrahydrofolate ligase family.

It catalyses the reaction (6S)-5,6,7,8-tetrahydrofolate + formate + ATP = (6R)-10-formyltetrahydrofolate + ADP + phosphate. Its pathway is one-carbon metabolism; tetrahydrofolate interconversion. This is Formate--tetrahydrofolate ligase from Caldicellulosiruptor saccharolyticus (strain ATCC 43494 / DSM 8903 / Tp8T 6331).